The sequence spans 626 residues: tRNA 5-methylaminomethyl-2-thiouridine biosynthesis bifunctional protein MnmC (626 aa).

Residues methionine 1–glutamine 237 form a tRNA (mnm(5)s(2)U34)-methyltransferase region. The interval isoleucine 255 to glutamate 626 is FAD-dependent cmnm(5)s(2)U34 oxidoreductase.

In the N-terminal section; belongs to the methyltransferase superfamily. tRNA (mnm(5)s(2)U34)-methyltransferase family. The protein in the C-terminal section; belongs to the DAO family. The cofactor is FAD.

The protein localises to the cytoplasm. It catalyses the reaction 5-aminomethyl-2-thiouridine(34) in tRNA + S-adenosyl-L-methionine = 5-methylaminomethyl-2-thiouridine(34) in tRNA + S-adenosyl-L-homocysteine + H(+). Its function is as follows. Catalyzes the last two steps in the biosynthesis of 5-methylaminomethyl-2-thiouridine (mnm(5)s(2)U) at the wobble position (U34) in tRNA. Catalyzes the FAD-dependent demodification of cmnm(5)s(2)U34 to nm(5)s(2)U34, followed by the transfer of a methyl group from S-adenosyl-L-methionine to nm(5)s(2)U34, to form mnm(5)s(2)U34. This Hahella chejuensis (strain KCTC 2396) protein is tRNA 5-methylaminomethyl-2-thiouridine biosynthesis bifunctional protein MnmC.